Here is a 232-residue protein sequence, read N- to C-terminus: 5'-methylthioadenosine/S-adenosylhomocysteine nucleosidase (232 aa).

The Proton acceptor role is filled by E14. Substrate-binding positions include G80, V154, and M175–E176. D199 acts as the Proton donor in catalysis.

Belongs to the PNP/UDP phosphorylase family. MtnN subfamily.

It catalyses the reaction S-adenosyl-L-homocysteine + H2O = S-(5-deoxy-D-ribos-5-yl)-L-homocysteine + adenine. The enzyme catalyses S-methyl-5'-thioadenosine + H2O = 5-(methylsulfanyl)-D-ribose + adenine. It carries out the reaction 5'-deoxyadenosine + H2O = 5-deoxy-D-ribose + adenine. The protein operates within amino-acid biosynthesis; L-methionine biosynthesis via salvage pathway; S-methyl-5-thio-alpha-D-ribose 1-phosphate from S-methyl-5'-thioadenosine (hydrolase route): step 1/2. Catalyzes the irreversible cleavage of the glycosidic bond in both 5'-methylthioadenosine (MTA) and S-adenosylhomocysteine (SAH/AdoHcy) to adenine and the corresponding thioribose, 5'-methylthioribose and S-ribosylhomocysteine, respectively. Also cleaves 5'-deoxyadenosine, a toxic by-product of radical S-adenosylmethionine (SAM) enzymes, into 5-deoxyribose and adenine. This is 5'-methylthioadenosine/S-adenosylhomocysteine nucleosidase from Actinobacillus pleuropneumoniae serotype 3 (strain JL03).